Reading from the N-terminus, the 138-residue chain is Cell death protein Grim (138 aa).

Disordered stretches follow at residues 21–71 (NGQQ…SVPL) and 119–138 (SSGGQNNDEDDVTDATSKEN). Over residues 23-51 (QQTAASPRTTATAAAPSQQQQQSQQQQQQ) the composition is skewed to low complexity.

Interacts with Diap2 (via BIR2 domain).

Activator of apoptosis, independent of rpr and hid, that acts on the effector Dredd. In Drosophila melanogaster (Fruit fly), this protein is Cell death protein Grim (grim).